Reading from the N-terminus, the 328-residue chain is Zinc transporter ZIP13 (328 aa).

At 1–7 (MPGCPCP) the chain is on the lumenal side. A helical membrane pass occupies residues 8-28 (GCGMAGPRLLFLTALALELLG). Over 29-68 (RAGGSQPALRSRGTATACRLDNKESESWGALLSGERLDTW) the chain is Cytoplasmic. A helical transmembrane segment spans residues 69–89 (ICSLLGSLMVGLSGVFPLLVI). The Lumenal segment spans residues 90-108 (PLEMGTMLRSEAGAWHLKQ). A helical transmembrane segment spans residues 109-129 (LLSFALGGLLGNVFLHLLPEA). Residues 130–149 (WAYTCSASPGGEGQSLQQQQ) lie on the Cytoplasmic side of the membrane. Residues 150–170 (QLGLWVIAGILTFLALEKMFL) form a helical membrane-spanning segment. Topologically, residues 171–199 (DSKEEGTSQVSGYLNLLANTIDNFTHGLA) are lumenal. The chain crosses the membrane as a helical span at residues 200 to 220 (VAASFLVSKKIGLLTTMAILL). An XEXPHE-motif motif is present at residues 221–226 (HEIPHE). Topologically, residues 221–242 (HEIPHEVGDFAILLRAGFDRWS) are cytoplasmic. Residues 243–263 (AAKLQLSTALGGLLGAGFAIC) form a helical membrane-spanning segment. Residues 264 to 273 (TQSPKGVEET) lie on the Lumenal side of the membrane. A helical transmembrane segment spans residues 274-294 (AAWVLPFTSGGFLYIALVNVL). At 295–306 (PDLLEEEDPWRS) the chain is on the cytoplasmic side. Residues 307 to 327 (LQQLLLLCAGIVVMVLFSLFV) traverse the membrane as a helical segment. A topological domain (lumenal) is located at residue aspartate 328.

The protein belongs to the ZIP transporter (TC 2.A.5) family. As to quaternary structure, homodimer.

The protein localises to the golgi apparatus membrane. Its subcellular location is the cytoplasmic vesicle membrane. It localises to the endoplasmic reticulum membrane. It catalyses the reaction Zn(2+)(in) = Zn(2+)(out). Functionally, functions as a zinc transporter transporting Zn(2+) from the Golgi apparatus to the cytosol and thus influences the zinc level at least in areas of the cytosol. May regulate beige adipocyte differentiation. In Pongo abelii (Sumatran orangutan), this protein is Zinc transporter ZIP13.